Consider the following 229-residue polypeptide: Cytidylate kinase (229 aa).

Residue G12–S20 participates in ATP binding.

This sequence belongs to the cytidylate kinase family. Type 1 subfamily.

It is found in the cytoplasm. It carries out the reaction CMP + ATP = CDP + ADP. The enzyme catalyses dCMP + ATP = dCDP + ADP. This is Cytidylate kinase from Rhodococcus jostii (strain RHA1).